The primary structure comprises 315 residues: Apolipoprotein F (315 aa).

The first 24 residues, 1 to 24 (MHSLRLILMSIQLLCYLLLCPVDA), serve as a signal peptide directing secretion. The propeptide occupies 25–154 (TSHGEATSVS…EQPGPKRAKR (130 aa)).

This sequence belongs to the apolipoprotein F family. Liver.

It is found in the secreted. Minor apolipoprotein that associates with LDL. Inhibits cholesteryl ester transfer protein (CETP) activity and appears to be an important regulator of cholesterol transport. Also associates to a lesser degree with VLDL, Apo-AI and Apo-AII. In Mus musculus (Mouse), this protein is Apolipoprotein F (Apof).